The chain runs to 430 residues: Resistance to inhibitors of cholinesterase protein 19 (430 aa).

The 205-residue stretch at 56 to 260 (ASDNELDTCL…TSRAFETLAE (205 aa)) folds into the AH domain. The disordered stretch occupies residues 279-342 (GTKPERERKS…SPLIEDVDDE (64 aa)). Residues 281-294 (KPERERKSEKEESA) are compositionally biased toward basic and acidic residues.

As to quaternary structure, interacts with the GTPase activator protein tbc-8; the interaction is direct and may be required for the activation of rab-2 and dense vesicle maturation in cholinergic motoneurons. Interacts with rund-1. Expressed in all neurons. Highly expressed in m2 pharyngeal neurons and some pharyngeal interneurons. Also expressed in the excretory canal and the gland cells located just below the nerve ring in the head.

The protein localises to the cytoplasm. Its subcellular location is the cytoplasmic vesicle membrane. Functionally, may be involved in neurotransmitter secretion. In association with the GTPase activator protein tbc-8 activates rab-2 during dense core vesicle maturation in cholinergic motoneurons. The sequence is that of Resistance to inhibitors of cholinesterase protein 19 from Caenorhabditis elegans.